Here is a 352-residue protein sequence, read N- to C-terminus: Photosystem II D2 protein (352 aa).

Position 2 is an N-acetylthreonine (T2). Position 2 is a phosphothreonine (T2). Residues 40-60 (CAYFALGGWLTGTTFVTSWYT) traverse the membrane as a helical segment. H117 is a binding site for chlorophyll a. A helical membrane pass occupies residues 124–140 (GFMLRQFEIARSVNLRP). Pheophytin a-binding residues include Q129 and N142. A helical transmembrane segment spans residues 152–165 (VFVSVFLIYPLGQS). Chlorophyll a is bound at residue H197. Residues 207-227 (AALLCAIHGATVENTLFEDGD) form a helical membrane-spanning segment. A plastoquinone contacts are provided by H214 and F261. Residue H214 coordinates Fe cation. H268 is a Fe cation binding site. The helical transmembrane segment at 278–294 (GLWMSAIGVVGLALNLR) threads the bilayer.

This sequence belongs to the reaction center PufL/M/PsbA/D family. PSII is composed of 1 copy each of membrane proteins PsbA, PsbB, PsbC, PsbD, PsbE, PsbF, PsbH, PsbI, PsbJ, PsbK, PsbL, PsbM, PsbT, PsbX, PsbY, PsbZ, Psb30/Ycf12, at least 3 peripheral proteins of the oxygen-evolving complex and a large number of cofactors. It forms dimeric complexes. The D1/D2 heterodimer binds P680, chlorophylls that are the primary electron donor of PSII, and subsequent electron acceptors. It shares a non-heme iron and each subunit binds pheophytin, quinone, additional chlorophylls, carotenoids and lipids. There is also a Cl(-1) ion associated with D1 and D2, which is required for oxygen evolution. The PSII complex binds additional chlorophylls, carotenoids and specific lipids. is required as a cofactor. Post-translationally, phosphorylated in vitro.

The protein resides in the plastid. The protein localises to the chloroplast thylakoid membrane. It catalyses the reaction 2 a plastoquinone + 4 hnu + 2 H2O = 2 a plastoquinol + O2. Its function is as follows. Photosystem II (PSII) is a light-driven water:plastoquinone oxidoreductase that uses light energy to abstract electrons from H(2)O, generating O(2) and a proton gradient subsequently used for ATP formation. It consists of a core antenna complex that captures photons, and an electron transfer chain that converts photonic excitation into a charge separation. The D1/D2 (PsbA/PsbD) reaction center heterodimer binds P680, the primary electron donor of PSII as well as several subsequent electron acceptors. D2 is needed for assembly of a stable PSII complex. The polypeptide is Photosystem II D2 protein (Chlamydomonas reinhardtii (Chlamydomonas smithii)).